The chain runs to 291 residues: T-cell leukemia homeobox protein 3 (291 aa).

The disordered stretch occupies residues 1 to 56; the sequence is MEAPASAQTPHPHEPISFGIDQILNSPDQDSAPAPRGPDGASYLGGPPGGRPGATY. The homeobox DNA-binding region spans 166–225; it reads RKKPRTSFSRVQICELEKRFHRQKYLASAERAALAKSLKMTDAQVKTWFQNRRTKWRRQT.

The protein resides in the nucleus. In Homo sapiens (Human), this protein is T-cell leukemia homeobox protein 3 (TLX3).